The primary structure comprises 318 residues: Protoheme IX farnesyltransferase (318 aa).

The next 9 membrane-spanning stretches (helical) occupy residues 29-49, 51-71, 102-122, 123-143, 151-171, 179-199, 219-239, 241-261, and 280-300; these read IIPLLLITTAGSMWIAAQGQV, PVLLLVTMAGGTLAAASAQTI, LIFAIALAVLSFTLLTVFANL, LAASLALSGIIFYVLIYTHWL, IVIGGAAGAIPALVGWAAVTG, LIFAIVFLWTPPHFWALALMI, ATVKQIWYYTLITVVATLLLV, PLHSSGIVYAAIAISLGAVFI, and LFLYSISYMMLLCLGMVIDSL.

Belongs to the UbiA prenyltransferase family. Protoheme IX farnesyltransferase subfamily.

Its subcellular location is the cell inner membrane. The enzyme catalyses heme b + (2E,6E)-farnesyl diphosphate + H2O = Fe(II)-heme o + diphosphate. It participates in porphyrin-containing compound metabolism; heme O biosynthesis; heme O from protoheme: step 1/1. Converts heme B (protoheme IX) to heme O by substitution of the vinyl group on carbon 2 of heme B porphyrin ring with a hydroxyethyl farnesyl side group. The protein is Protoheme IX farnesyltransferase of Trichormus variabilis (strain ATCC 29413 / PCC 7937) (Anabaena variabilis).